The primary structure comprises 662 residues: Probable quinol oxidase subunit 1 (662 aa).

2 consecutive transmembrane segments (helical) span residues 14-34 and 58-78; these read WMIT…IAVI and IMYL…ALLI. Residue His102 coordinates Fe(II)-heme a. The next 8 membrane-spanning stretches (helical) occupy residues 103 to 123, 140 to 160, 187 to 207, 228 to 248, 273 to 293, 311 to 331, 336 to 356, and 376 to 396; these read GVIM…NIVV, VSFW…IIGG, IAIQ…FVTI, FITT…LALM, FFWV…FGIY, MVWA…HHFF, GALI…PTGV, and MLFS…GVML. Residues His279, Tyr283, His328, and His329 each coordinate Cu cation. Residues 279 to 283 constitute a cross-link (1'-histidyl-3'-tyrosine (His-Tyr)); that stretch reads HPEVY. His414 is a heme a3 binding site. The next 5 membrane-spanning stretches (helical) occupy residues 415 to 435, 451 to 471, 493 to 513, 587 to 604, and 608 to 627; these read FHYT…IFWY, CFWF…ILGL, ISTI…VSIV, PVGF…FFLI, and VIPA…YRSF. His416 contributes to the Fe(II)-heme a binding site.

This sequence belongs to the heme-copper respiratory oxidase family. It depends on Cu cation as a cofactor. Ferriheme a serves as cofactor. Heme A3. is required as a cofactor.

It is found in the cell membrane. It carries out the reaction 2 a quinol + O2 = 2 a quinone + 2 H2O. It participates in energy metabolism; oxidative phosphorylation. Functionally, catalyzes quinol oxidation with the concomitant reduction of oxygen to water. The polypeptide is Probable quinol oxidase subunit 1 (qoxB) (Staphylococcus aureus (strain USA300)).